The primary structure comprises 350 residues: Very-long-chain 3-oxoacyl-CoA reductase (350 aa).

Residues 28–48 (SLVLLAGIGALSVGTFALRLV) form a helical membrane-spanning segment. Residues valine 79, aspartate 134, asparagine 161, lysine 196, tyrosine 228, lysine 232, valine 261, and serine 263 each coordinate NADP(+). The Proton donor role is filled by tyrosine 228. Catalysis depends on lysine 232, which acts as the Lowers pKa of active site Tyr.

Belongs to the short-chain dehydrogenases/reductases (SDR) family.

The protein resides in the endoplasmic reticulum membrane. It catalyses the reaction a very-long-chain (3R)-3-hydroxyacyl-CoA + NADP(+) = a very-long-chain 3-oxoacyl-CoA + NADPH + H(+). It participates in lipid metabolism; fatty acid biosynthesis. Its function is as follows. Component of the microsomal membrane bound fatty acid elongation system, which produces the 26-carbon very long-chain fatty acids (VLCFA) from palmitate. Catalyzes the reduction of the 3-ketoacyl-CoA intermediate that is formed in each cycle of fatty acid elongation. VLCFAs serve as precursors for ceramide and sphingolipids. The sequence is that of Very-long-chain 3-oxoacyl-CoA reductase from Mycosarcoma maydis (Corn smut fungus).